A 127-amino-acid chain; its full sequence is Prefoldin subunit 6 (127 aa).

At Ala-2 the chain carries N-acetylalanine. Lys-21 carries the N6-acetyllysine modification. Residue Lys-66 is modified to N6-acetyllysine; alternate. A Glycyl lysine isopeptide (Lys-Gly) (interchain with G-Cter in SUMO1); alternate cross-link involves residue Lys-66. Lys-66 is covalently cross-linked (Glycyl lysine isopeptide (Lys-Gly) (interchain with G-Cter in SUMO2); alternate).

This sequence belongs to the prefoldin subunit beta family. As to quaternary structure, heterohexamer of two PFD-alpha type and four PFD-beta type subunits. Component of the PAQosome complex which is responsible for the biogenesis of several protein complexes and which consists of R2TP complex members RUVBL1, RUVBL2, RPAP3 and PIH1D1, URI complex members PFDN2, PFDN6, PDRG1, UXT and URI1 as well as ASDURF, POLR2E and DNAAF10/WDR92.

Functionally, binds specifically to cytosolic chaperonin (c-CPN) and transfers target proteins to it. Binds to nascent polypeptide chain and promotes folding in an environment in which there are many competing pathways for nonnative proteins. The protein is Prefoldin subunit 6 (Pfdn6) of Mus musculus (Mouse).